The sequence spans 916 residues: Protein translocase subunit SecA (916 aa).

ATP is bound by residues Gln-87, 105 to 109 (GEGKT), and Asp-507. Residues Cys-900, Cys-902, Cys-911, and His-912 each coordinate Zn(2+).

This sequence belongs to the SecA family. Monomer and homodimer. Part of the essential Sec protein translocation apparatus which comprises SecA, SecYEG and auxiliary proteins SecDF-YajC and YidC. It depends on Zn(2+) as a cofactor.

The protein resides in the cell inner membrane. It localises to the cytoplasm. The catalysed reaction is ATP + H2O + cellular proteinSide 1 = ADP + phosphate + cellular proteinSide 2.. Functionally, part of the Sec protein translocase complex. Interacts with the SecYEG preprotein conducting channel. Has a central role in coupling the hydrolysis of ATP to the transfer of proteins into and across the cell membrane, serving both as a receptor for the preprotein-SecB complex and as an ATP-driven molecular motor driving the stepwise translocation of polypeptide chains across the membrane. This Neisseria meningitidis serogroup A / serotype 4A (strain DSM 15465 / Z2491) protein is Protein translocase subunit SecA.